We begin with the raw amino-acid sequence, 40 residues long: Dolichyl-diphosphooligosaccharide--protein glycosyltransferase subunit 4 (40 aa).

The Lumenal portion of the chain corresponds to 1 to 4; sequence MITD. Residues 5-25 traverse the membrane as a helical segment; it reads VQLAIFSNVLGVFLFLLVVAY. Over 26 to 40 the chain is Cytoplasmic; sequence HYINANTGKSSPKAK.

Belongs to the OST4 family. Component of the oligosaccharyltransferase (OST) complex.

Its subcellular location is the endoplasmic reticulum membrane. Subunit of the oligosaccharyl transferase (OST) complex that catalyzes the initial transfer of a defined glycan (Glc(3)Man(9)GlcNAc(2) in eukaryotes) from the lipid carrier dolichol-pyrophosphate to an asparagine residue within an Asn-X-Ser/Thr consensus motif in nascent polypeptide chains, the first step in protein N-glycosylation. N-glycosylation occurs cotranslationally and the complex associates with the Sec61 complex at the channel-forming translocon complex that mediates protein translocation across the endoplasmic reticulum (ER). All subunits are required for a maximal enzyme activity. This Drosophila persimilis (Fruit fly) protein is Dolichyl-diphosphooligosaccharide--protein glycosyltransferase subunit 4.